An 863-amino-acid chain; its full sequence is DNA mismatch repair protein MutS (863 aa).

607-614 (GPNMAGKS) provides a ligand contact to ATP.

This sequence belongs to the DNA mismatch repair MutS family.

Functionally, this protein is involved in the repair of mismatches in DNA. It is possible that it carries out the mismatch recognition step. This protein has a weak ATPase activity. The protein is DNA mismatch repair protein MutS of Caldicellulosiruptor bescii (strain ATCC BAA-1888 / DSM 6725 / KCTC 15123 / Z-1320) (Anaerocellum thermophilum).